We begin with the raw amino-acid sequence, 100 residues long: Aspartyl/glutamyl-tRNA(Asn/Gln) amidotransferase subunit C (100 aa).

It belongs to the GatC family. Heterotrimer of A, B and C subunits.

It catalyses the reaction L-glutamyl-tRNA(Gln) + L-glutamine + ATP + H2O = L-glutaminyl-tRNA(Gln) + L-glutamate + ADP + phosphate + H(+). The catalysed reaction is L-aspartyl-tRNA(Asn) + L-glutamine + ATP + H2O = L-asparaginyl-tRNA(Asn) + L-glutamate + ADP + phosphate + 2 H(+). Allows the formation of correctly charged Asn-tRNA(Asn) or Gln-tRNA(Gln) through the transamidation of misacylated Asp-tRNA(Asn) or Glu-tRNA(Gln) in organisms which lack either or both of asparaginyl-tRNA or glutaminyl-tRNA synthetases. The reaction takes place in the presence of glutamine and ATP through an activated phospho-Asp-tRNA(Asn) or phospho-Glu-tRNA(Gln). In Streptococcus pneumoniae (strain P1031), this protein is Aspartyl/glutamyl-tRNA(Asn/Gln) amidotransferase subunit C.